Here is a 277-residue protein sequence, read N- to C-terminus: Putative pyruvate, phosphate dikinase regulatory protein (277 aa).

156-163 (GVSRTSKT) is a binding site for ADP.

The protein belongs to the pyruvate, phosphate/water dikinase regulatory protein family. PDRP subfamily.

The enzyme catalyses N(tele)-phospho-L-histidyl/L-threonyl-[pyruvate, phosphate dikinase] + ADP = N(tele)-phospho-L-histidyl/O-phospho-L-threonyl-[pyruvate, phosphate dikinase] + AMP + H(+). The catalysed reaction is N(tele)-phospho-L-histidyl/O-phospho-L-threonyl-[pyruvate, phosphate dikinase] + phosphate + H(+) = N(tele)-phospho-L-histidyl/L-threonyl-[pyruvate, phosphate dikinase] + diphosphate. In terms of biological role, bifunctional serine/threonine kinase and phosphorylase involved in the regulation of the pyruvate, phosphate dikinase (PPDK) by catalyzing its phosphorylation/dephosphorylation. The polypeptide is Putative pyruvate, phosphate dikinase regulatory protein (Carboxydothermus hydrogenoformans (strain ATCC BAA-161 / DSM 6008 / Z-2901)).